We begin with the raw amino-acid sequence, 349 residues long: Leucine-rich repeat-containing protein 58 (349 aa).

10 LRR repeats span residues 14 to 34, 35 to 56, 58 to 80, 81 to 102, 105 to 125, 128 to 149, 151 to 173, 174 to 195, 197 to 217, and 219 to 239; these read NLTH…NKRK, DVQQ…VNSF, HLHL…LGLT, KLKT…KELG, RLEV…QFLQ, TLKS…IENL, SLEF…ANLP, YLSY…LAQV, SLRS…ILSL, and QLQE…RDLT.

The protein is Leucine-rich repeat-containing protein 58 (lrrc58) of Xenopus tropicalis (Western clawed frog).